Here is a 906-residue protein sequence, read N- to C-terminus: MGRYWLLPGLLLSLPLVTGWSTSNCLVTEGSRLPLVSRYFTFCRHSKLSFLAACLSVSNLTQTLEVVPRTVEGLCLGGTVSTLLPDAFSAFPGLKVLALSLHLTQLLPGALRGLGQLQSLSFFDSPLRRSLFLPPDAFSDLISLQRLHISGPCLDKKAGIRLPPGLQWLGVTLSCIQDVGELAGMFPDLVQGSSSRVSWTLQKLDLSSNWKLKMASPGSLQGLQVEILDLTRTPLDAVWLKGLGLQKLDVLYAQTATAELAAEAVAHFELQGLIVKESKIGSISQEALASCHSLKTLGLSSTGLTKLPPGFLTAMPRLQRLELSGNQLQSAVLCMNETGDVSGLTTLDLSGNRLRILPPAAFSCLPHLRELLLRYNQLLSLEGYLFQELQQLETLKLDGNPLLHLGKNWLAALPALTTLSLLDTQIRMSPEPGFWGAKNLHTLSLKLPALPAPAVLFLPMYLTSLELHIASGTTEHWTLSPAIFPSLETLTISGGGLKLKLGSQNASGVFPALQKLSLLKNSLDAFCSQGTSNLFLWQLPKLQSLRVWGAGNSSRPCLITGLPSLRELKLASLQSITQPRSVQLEELVGDLPQLQALVLSSTGLKSLSAAAFQRLHSLQVLVLEYEKDLMLQDSLREYSPQMPHYIYILESNLACHCANAWMEPWVKRSTKTYIYIRDNRLCPGQDRLSARGSLPSFLWDHCPQTLELKLFLASSALVFMLIALPLLQEARNSWIPYLQALFRVWLQGLRGKGDKGKRFLFDVFVSHCRQDQGWVIEELLPALEGFLPAGLGLRLCLPERDFEPGKDVVDNVVDSMLSSRTTLCVLSGQALCNPRCRLELRLATSLLLAAPSPPVLLLVFLEPISRHQLPGYHRLARLLRRGDYCLWPEEEERKSGFWTWLRSRLG.

An N-terminal signal peptide occupies residues 1–21 (MGRYWLLPGLLLSLPLVTGWS). The Extracellular segment spans residues 22-709 (TSNCLVTEGS…DHCPQTLELK (688 aa)). The N-linked (GlcNAc...) asparagine glycan is linked to Asn59. LRR repeat units follow at residues 91–114 (FPGLKVLALSLHLTQLLPGALRGL), 115–140 (GQLQSLSFFDSPLRRSLFLPPDAFSD), 142–170 (ISLQRLHISGPCLDKKAGIRLPPGLQWLG), 198–222 (SWTLQKLDLSSNWKLKMASPGSLQG), 224–247 (QVEILDLTRTPLDAVWLKGLGLQK), 267–290 (HFELQGLIVKESKIGSISQEALAS), 291–314 (CHSLKTLGLSSTGLTKLPPGFLTA), 316–338 (PRLQRLELSGNQLQSAVLCMNET), 341–364 (VSGLTTLDLSGNRLRILPPAAFSC), 366–388 (PHLRELLLRYNQLLSLEGYLFQE), 389–412 (LQQLETLKLDGNPLLHLGKNWLAA), 414–436 (PALTTLSLLDTQIRMSPEPGFWG), 462–484 (LTSLELHIASGTTEHWTLSPAIF), 485–508 (PSLETLTISGGGLKLKLGSQNASG), and 510–533 (FPALQKLSLLKNSLDAFCSQGTSN). Residue Asn336 is glycosylated (N-linked (GlcNAc...) asparagine). A glycan (N-linked (GlcNAc...) asparagine) is linked at Asn505. Residue Asn552 is glycosylated (N-linked (GlcNAc...) asparagine). LRR repeat units lie at residues 562-586 (LPSLRELKLASLQSITQPRSVQLEE) and 591-614 (LPQLQALVLSSTGLKSLSAAAFQR). The helical transmembrane segment at 710–730 (LFLASSALVFMLIALPLLQEA) threads the bilayer. At 731-906 (RNSWIPYLQA…FWTWLRSRLG (176 aa)) the chain is on the cytoplasmic side. Residues 759 to 905 (FLFDVFVSHC…GFWTWLRSRL (147 aa)) enclose the TIR domain.

The protein belongs to the Toll-like receptor family. In terms of assembly, binds MYD88 via their respective TIR domains. In terms of tissue distribution, macrophages, liver, kidney and bladder epithelial cells.

The protein resides in the membrane. Participates in the innate immune response to microbial agents. Acts via MYD88 and TRAF6, leading to NF-kappa-B activation, cytokine secretion and the inflammatory response. Plays a role in preventing infection of internal organs of the urogenital system. The protein is Toll-like receptor 12 of Mus musculus (Mouse).